Here is a 230-residue protein sequence, read N- to C-terminus: Ribonuclease 3 (230 aa).

The 128-residue stretch at Ile-8–Asn-135 folds into the RNase III domain. Glu-48 lines the Mg(2+) pocket. Asp-52 is a catalytic residue. Mg(2+)-binding residues include Asp-121 and Glu-124. The active site involves Glu-124. Positions Asp-161–Lys-230 constitute a DRBM domain.

Belongs to the ribonuclease III family. In terms of assembly, homodimer. Requires Mg(2+) as cofactor.

It localises to the cytoplasm. The catalysed reaction is Endonucleolytic cleavage to 5'-phosphomonoester.. Its function is as follows. Digests double-stranded RNA. Involved in the processing of primary rRNA transcript to yield the immediate precursors to the large and small rRNAs (23S and 16S). Processes some mRNAs, and tRNAs when they are encoded in the rRNA operon. Processes pre-crRNA and tracrRNA of type II CRISPR loci if present in the organism. This Natranaerobius thermophilus (strain ATCC BAA-1301 / DSM 18059 / JW/NM-WN-LF) protein is Ribonuclease 3.